A 256-amino-acid polypeptide reads, in one-letter code: DNA repair protein RecO (256 aa).

Belongs to the RecO family.

Involved in DNA repair and RecF pathway recombination. The chain is DNA repair protein RecO from Bacillus pumilus (strain SAFR-032).